Reading from the N-terminus, the 184-residue chain is Serine recombinase PinE (184 aa).

A Resolvase/invertase-type recombinase catalytic domain is found at 1–134; sequence MLIGYVRVST…AGLETARAQG (134 aa). Ser-9 serves as the catalytic O-(5'-phospho-DNA)-serine intermediate. Positions 161 to 180 form a DNA-binding region, H-T-H motif; it reads RQKVAIIYDVGVSTLYKRFP.

Belongs to the site-specific recombinase resolvase family.

In terms of biological role, this protein catalyzes the inversion of an 1800-bp E.coli DNA fragment, the P region, which can exist in either orientation. The function of the inversion is not yet clear. This is Serine recombinase PinE (pinE) from Escherichia coli (strain K12).